Here is a 142-residue protein sequence, read N- to C-terminus: MKLLVEKTNEKAIIPFQAHEGDAGMDLFSVEEITLKPMERKLIHTGIKIQLPKDTEAQIRPRSGLALKHGITVLNTPGTIDEGYRGEIGIILINLGSEEFKVEEGMKIAQMVIKPTLTLKVEEVVELTETTRGENGFGSTGV.

Substrate contacts are provided by residues 62–64 (RSG), asparagine 75, and 79–81 (TID).

The protein belongs to the dUTPase family. Mg(2+) serves as cofactor.

It carries out the reaction dUTP + H2O = dUMP + diphosphate + H(+). It participates in pyrimidine metabolism; dUMP biosynthesis; dUMP from dCTP (dUTP route): step 2/2. Functionally, this enzyme is involved in nucleotide metabolism: it produces dUMP, the immediate precursor of thymidine nucleotides and it decreases the intracellular concentration of dUTP so that uracil cannot be incorporated into DNA. This chain is Deoxyuridine 5'-triphosphate nucleotidohydrolase, found in Clostridium novyi (strain NT).